A 376-amino-acid chain; its full sequence is Chaperone protein DnaJ (376 aa).

The J domain occupies 5 to 69; the sequence is DYYEVLGVSK…QKRAQYDQYG (65 aa). The segment at 133 to 215 adopts a CR-type zinc-finger fold; it reads GKDAEIEIPR…CHGKGRVTKT (83 aa). Cys146, Cys149, Cys163, Cys166, Cys189, Cys192, Cys203, and Cys206 together coordinate Zn(2+). 4 CXXCXGXG motif repeats span residues 146-153, 163-170, 189-196, and 203-210; these read CDTCHGSG, CSHCGGKG, CQYCNGTG, and CPTCHGKG.

It belongs to the DnaJ family. Homodimer. It depends on Zn(2+) as a cofactor.

It localises to the cytoplasm. Participates actively in the response to hyperosmotic and heat shock by preventing the aggregation of stress-denatured proteins and by disaggregating proteins, also in an autonomous, DnaK-independent fashion. Unfolded proteins bind initially to DnaJ; upon interaction with the DnaJ-bound protein, DnaK hydrolyzes its bound ATP, resulting in the formation of a stable complex. GrpE releases ADP from DnaK; ATP binding to DnaK triggers the release of the substrate protein, thus completing the reaction cycle. Several rounds of ATP-dependent interactions between DnaJ, DnaK and GrpE are required for fully efficient folding. Also involved, together with DnaK and GrpE, in the DNA replication of plasmids through activation of initiation proteins. This Listeria monocytogenes serotype 4b (strain CLIP80459) protein is Chaperone protein DnaJ.